The following is a 153-amino-acid chain: Lipoprotein signal peptidase (153 aa).

Helical transmembrane passes span 6–26 (IVAV…SYIV), 60–80 (QQLL…WYLH), and 85–105 (DSFW…GNFI). Active-site residues include D115 and D131. The chain crosses the membrane as a helical span at residues 124 to 144 (FAIFNVADSYLTVGVIILLIA).

This sequence belongs to the peptidase A8 family.

Its subcellular location is the cell membrane. The catalysed reaction is Release of signal peptides from bacterial membrane prolipoproteins. Hydrolyzes -Xaa-Yaa-Zaa-|-(S,diacylglyceryl)Cys-, in which Xaa is hydrophobic (preferably Leu), and Yaa (Ala or Ser) and Zaa (Gly or Ala) have small, neutral side chains.. It participates in protein modification; lipoprotein biosynthesis (signal peptide cleavage). In terms of biological role, this protein specifically catalyzes the removal of signal peptides from prolipoproteins. The polypeptide is Lipoprotein signal peptidase (Streptococcus pneumoniae (strain ATCC BAA-255 / R6)).